We begin with the raw amino-acid sequence, 330 residues long: MTKIMFFGTRDYEKEMALNWGKKNNVEVTTSKELLSSATVDQLKDYDGVTTMQFGKLENDVYPKLESYGIKQIAQRTAGFDMYDLDLAKKHNIVISNVPSYSPETIAEYSVSIALQLVRRFPDIERRVQAHDFTWQAEIMSKPVKNMTVAIIGTGRIGAATAKIYAGFGATITAYDAYPNKDLDFLTYKDSVKEAIKDADIISLHVPANKESYHLFDKAMFDHVKKGAILVNAARGAVINTPDLIAAVNDGTLLGAAIDTYENEAAYFTNDWTNKDIDDKTLLELIEHERILVTPHIAFFSDEAVQNLVEGGLNAALSVINTGTCETRLN.

Residues 156–157 (RI), aspartate 176, 206–207 (VP), 233–235 (AAR), and aspartate 259 each bind NAD(+). Arginine 235 is an active-site residue. Residue glutamate 264 is part of the active site. Histidine 296 functions as the Proton donor in the catalytic mechanism.

The protein belongs to the D-isomer specific 2-hydroxyacid dehydrogenase family.

It carries out the reaction (R)-lactate + NAD(+) = pyruvate + NADH + H(+). This Staphylococcus aureus protein is D-lactate dehydrogenase (ldhD).